Here is a 143-residue protein sequence, read N- to C-terminus: Sporulation-specific cell division protein SsgB (143 aa).

This sequence belongs to the SsgA family. Interacts with SsgA. Interacts with FtsZ (via N-terminus).

The protein localises to the cell septum. In terms of biological role, involved in sporulation-specific cell division. Required for early stages of sporulation. Important in the process of growth cessation prior to sporulation-specific cell division. Recruits cell division protein FtsZ to the future septum sites and tethers the contractile ring structure (Z ring) to the cytoplasmic membrane during sporulation. Stimulates polymerization and filament length of FtsZ in vitro. The sequence is that of Sporulation-specific cell division protein SsgB from Frankia casuarinae (strain DSM 45818 / CECT 9043 / HFP020203 / CcI3).